A 27-amino-acid polypeptide reads, in one-letter code: Conotoxin Lo6/7b (27 aa).

3 cysteine pairs are disulfide-bonded: cysteine 2/cysteine 16, cysteine 9/cysteine 19, and cysteine 15/cysteine 26. Tyrosine amide is present on tyrosine 27.

Expressed by the venom duct.

The protein localises to the secreted. Functionally, 1 uM of this toxin does not show any effect on voltage-gated sodium and potassium channels. Does not show antibacterial activity on both Gram-negative and Gram-positive bacteria. The protein is Conotoxin Lo6/7b of Conasprella longurionis (Cone snail).